The chain runs to 186 residues: Adenine phosphoribosyltransferase (186 aa).

Belongs to the purine/pyrimidine phosphoribosyltransferase family. In terms of assembly, homodimer.

It is found in the cytoplasm. It catalyses the reaction AMP + diphosphate = 5-phospho-alpha-D-ribose 1-diphosphate + adenine. It functions in the pathway purine metabolism; AMP biosynthesis via salvage pathway; AMP from adenine: step 1/1. Functionally, catalyzes a salvage reaction resulting in the formation of AMP, that is energically less costly than de novo synthesis. This is Adenine phosphoribosyltransferase from Xanthomonas campestris pv. campestris (strain B100).